We begin with the raw amino-acid sequence, 473 residues long: P3 protein (473 aa).

A run of 9 helical transmembrane segments spans residues 25-45 (FVGMLGTALLFISLPWGAQVM), 221-241 (PMLLGLLGQFLVMPFYAFLMA), 249-269 (ALALGLIITCSSPGGGGSYLF), 277-297 (VTLAISMTFISTVAATGFLPL), 316-336 (ISKILGTLLFIAIPIAAGVVI), 356-376 (FILLLGGLFLAYHMGVFILVG), 381-401 (IVLVGFTVPLVGLLVGYSLAI), 413-433 (VSIEVGVQNSLLALAMLQLSL), and 446-466 (FIVALSGTSEMLALVIGQFIY).

This sequence belongs to the bile acid:sodium symporter (BASS) (TC 2.A.28) family.

The protein localises to the membrane. The ubiquitous expression and the conservation of the sequence in distant animal species suggest that the gene codes for a protein with housekeeping functions. The polypeptide is P3 protein (Slc10a3) (Mus musculus (Mouse)).